The following is a 1030-amino-acid chain: uncharacterized protein (1030 aa).

Residues 1–15 (MSENSTDSKNFQFSE) show a composition bias toward polar residues. Residues 1-53 (MSENSTDSKNFQFSEGSRESSNDELKVLLRDTETKEDEKSSFSNSEEESIIEN) are disordered. The span at 16-40 (GSRESSNDELKVLLRDTETKEDEKS) shows a compositional bias: basic and acidic residues. S41 carries the phosphoserine modification. The 157-residue stretch at 134-290 (IKCVERMESV…WISEIHKQPC (157 aa)) folds into the Helicase ATP-binding domain. 147–154 (AHTSAGKT) serves as a coordination point for ATP. The short motif at 238 to 241 (DEVH) is the DEVH box element. Residues 357-561 (SLERIINMVL…GMILNLMRIE (205 aa)) enclose the Helicase C-terminal domain.

Belongs to the helicase family. SKI2 subfamily.

It localises to the nucleus. This is an uncharacterized protein from Schizosaccharomyces pombe (strain 972 / ATCC 24843) (Fission yeast).